The primary structure comprises 355 residues: Chemerin-like receptor 2 (355 aa).

The Extracellular portion of the chain corresponds to 1-41 (MEDLEETLFEEFENYSYALDYYSLESDLEEKVQLGVVHWVS). Asparagine 14 carries N-linked (GlcNAc...) asparagine glycosylation. Residues 42–62 (LVLYCLSFVLGIPGNAIVIWF) form a helical membrane-spanning segment. At 63–73 (TGFKWKRTVST) the chain is on the cytoplasmic side. The helical transmembrane segment at 74–94 (LWFLNLAIADFIFLLFLPLYI) threads the bilayer. Topologically, residues 95-112 (SYVVMNFHWPFGIWLCKA) are extracellular. A disulfide bridge links cysteine 110 with cysteine 187. Residues 113–133 (NSFTAQLNMFASVFFLTVISL) traverse the membrane as a helical segment. Residues 134–154 (DHYIHLIHPVLSHRHRTLKNS) are Cytoplasmic-facing. The chain crosses the membrane as a helical span at residues 155-175 (LIVIIFIWLLASLIGGPALYF). Topologically, residues 176-210 (RDTVEFNNHTLCYNNFQKHDPDLTVIRHHVLTWVK) are extracellular. Residues 211–231 (YIVGYLFPLLTMSICYLCLIL) traverse the membrane as a helical segment. Over 232–247 (KVKKRSILISSRHFWT) the chain is Cytoplasmic. Residues 248–268 (ILAVVVAFVVCWTPYHLFSIW) traverse the membrane as a helical segment. At 269 to 286 (ELTIHHNSYSHHVMQAGI) the chain is on the extracellular side. Residues 287-307 (PLSTGLAFLNSCLNPILYVLI) traverse the membrane as a helical segment. Residues 308–355 (SKKFQARFRSSVAEILKYTLWEVSCSGTVSEQLRNSETKNLCLLETAQ) are Cytoplasmic-facing.

It belongs to the chemokine-like receptor (CMKLR) family.

It is found in the cell membrane. Functionally, receptor for chemoattractant adipokine chemerin/RARRES2 suggesting a role for this receptor in the regulation of inflammation and energy homesotasis. Signals mainly via beta-arrestin pathway. Binding of RARRES2 activates weakly G proteins, calcium mobilization and MAPK1/MAPK3 (ERK1/2) phosphorylation too. Acts also as a receptor for TAFA1, mediates its effects on neuronal stem-cell proliferation and differentiation via the activation of ROCK/ERK and ROCK/STAT3 signaling pathway. The polypeptide is Chemerin-like receptor 2 (CMKLR2) (Macaca fascicularis (Crab-eating macaque)).